The chain runs to 430 residues: Maintenance of mitochondrial morphology protein 1 (430 aa).

Residues 1–82 are Lumenal-facing; that stretch reads MTEIDPNINE…ISNTWNFTQG (82 aa). A helical transmembrane segment spans residues 83–103; it reads LVVGQLSVIFLIIIFVKFFVF. The Cytoplasmic portion of the chain corresponds to 104–430; that stretch reads ADSSSSIPSK…AKPKDSDDTL (327 aa). Composition is skewed to basic and acidic residues over residues 126 to 138 and 335 to 346; these read RDNKSTTSRDRHN and ENGKGSSSEDKK. 2 disordered regions span residues 126–154 and 315–346; these read RDNKSTTSRDRHNGIGGKDSNLEPSTDDE and QADQVARPSNGHTSTDNGNDENGKGSSSEDKK. One can recognise an SMP-LTD domain in the interval 178 to 408; sequence ASESLDWFNV…EPRFQVVKLP (231 aa).

It belongs to the MMM1 family. As to quaternary structure, homodimer. Component of the ER-mitochondria encounter structure (ERMES) or MDM complex, composed of MMM1, MDM10, MDM12 and MDM34. An MMM1 homodimer associates with one molecule of MDM12 on each side in a pairwise head-to-tail manner, and the SMP-LTD domains of MMM1 and MDM12 generate a continuous hydrophobic tunnel for phospholipid trafficking.

It localises to the endoplasmic reticulum membrane. Functionally, component of the ERMES/MDM complex, which serves as a molecular tether to connect the endoplasmic reticulum (ER) and mitochondria. Components of this complex are involved in the control of mitochondrial shape and protein biogenesis, and function in nonvesicular lipid trafficking between the ER and mitochondria. The MDM12-MMM1 subcomplex functions in the major beta-barrel assembly pathway that is responsible for biogenesis of all outer membrane beta-barrel proteins, and acts in a late step after the SAM complex. The MDM10-MDM12-MMM1 subcomplex further acts in the TOM40-specific pathway after the action of the MDM12-MMM1 complex. Essential for establishing and maintaining the structure of mitochondria and maintenance of mtDNA nucleoids. In Lodderomyces elongisporus (strain ATCC 11503 / CBS 2605 / JCM 1781 / NBRC 1676 / NRRL YB-4239) (Yeast), this protein is Maintenance of mitochondrial morphology protein 1.